Consider the following 684-residue polypeptide: Glycine--tRNA ligase beta subunit (684 aa).

This sequence belongs to the class-II aminoacyl-tRNA synthetase family. Tetramer of two alpha and two beta subunits.

It localises to the cytoplasm. It carries out the reaction tRNA(Gly) + glycine + ATP = glycyl-tRNA(Gly) + AMP + diphosphate. This chain is Glycine--tRNA ligase beta subunit, found in Pseudomonas aeruginosa (strain UCBPP-PA14).